Reading from the N-terminus, the 528-residue chain is Capsule biosynthesis protein CapD proenzyme (528 aa).

An N-terminal signal peptide occupies residues 1-26; that stretch reads MNSFKWGKKIILFCLIVSLMGGIGVS. Threonine 352 functions as the Nucleophile in the catalytic mechanism. Poly-gamma-D-glutamate is bound by residues threonine 352, 429–432, and arginine 520; that span reads GGNR.

This sequence belongs to the gamma-glutamyltransferase family. In terms of assembly, this enzyme consists of two polypeptide chains, which are synthesized in precursor form from a single polypeptide. Cleaved by autocatalysis into a large and a small subunit.

The protein operates within capsule biogenesis; capsule polysaccharide biosynthesis. Its function is as follows. Transpeptidase that cleaves the poly-gamma-D-glutamate capsule and catalyzes the formation of an amide bond with the side-chain amino group of meso-diaminopimelic acid (m-DAP) in the peptidoglycan scaffold. Degradation of the high-molecular weight capsule (H-capsule) to the lower-molecular weight capsule (L-capsule), which is released from the bacterial cell surface. The production of L-capsule is essential to mediate escape from host defenses. This chain is Capsule biosynthesis protein CapD proenzyme (capD), found in Bacillus anthracis.